Reading from the N-terminus, the 505-residue chain is MFS-type transporter oryN (505 aa).

Residues 1–54 are disordered; sequence MAVAELPNIVSTDSSPSPHPGSRLSSEPTDIESQKAPSNAEPKTDPNLVTWDGP. 13 consecutive transmembrane segments (helical) span residues 69-89, 106-126, 135-155, 166-186, 193-213, 226-246, 280-300, 301-321, 337-357, 376-396, 401-421, 440-460, and 468-488; these read AFVT…SSIF, VVTL…PVWG, KWPM…VAVA, FLTG…LVDM, GVAM…APLM, FTQW…VFGL, GIKD…VTEP, ILLL…LVFV, ISAL…AIVV, LPLM…FAWT, IHWA…YMVF, IGAN…FGPF, and AWAS…PVLF.

It belongs to the major facilitator superfamily. CAR1 family.

Its subcellular location is the membrane. Functionally, MFS-type transporter; part of the gene cluster that mediates the biosynthesis of oryzines, natural products with an unusual maleidride backbone. The sequence is that of MFS-type transporter oryN from Aspergillus oryzae (strain ATCC 42149 / RIB 40) (Yellow koji mold).